A 686-amino-acid polypeptide reads, in one-letter code: MYLKSLKIYNFRKFGTNNNKIEFVDAKSFQEQRNKKEVNIAPTTTLIVGKNNCGKTTIIKSLDNLINNNKDAFKANDFNFLYLKKLIEYYEQAIPKLDDELKEKIKTPYLQFNICIGIENNSNDLVTNIVRFMKLDDINNSELKIVIKVELENEEVFIRDVKKLLEKNDNSSLRFNSFLELINDSDFKINYYNTDNDKIDNFNIKNLIELRPIKANNIESEKCLSKAFSKIIEYRYKTLFEEESDNLNSTIININRTLTKLISEKHTVSINKSLEEIESNEKLQVLLRADLTFQNVMNNLIKYEYVERNMNIPENQFGLGYTNLMMIIADLIDYMEKYPENSFNSKVNLISIEEPETFMHPQMQELFIKNINEAIASLLKSKNKNVNSQLIITTHSSHILNSKIHSGNTFNNINYVTTKNNYTHVVNLHDDIIIPKSEKKAHKREQDLKFLKKHIKYKVSELFFSDAIIFVEGVTEETLLKYYIDDNNKLNKYYISVFNIDGAHGMVYHNLIEILQVPALIITDLDIERDDDEKKNFKQISDLTGKFTTNKTIKKYNDDSNSLEELQHEQLKINNMYIAYQGKIEEYYATSFEEAFILTNYKNELLNSVLKKMKPQIYENIMGEGDDFTKIKENSYKLQKKLSNDKSDFANELLYKFITEDITIPSLPKYIKSGLSWLAKKLEGEE.

Positions 1–423 (MYLKSLKIYN…NYVTTKNNYT (423 aa)) are ATPase domain. Residue 52 to 56 (NCGKT) participates in ATP binding. The interval 463-599 (FFSDAIIFVE…TSFEEAFILT (137 aa)) is toprim domain. Residues Glu-472, Glu-476, Asp-559, and Glu-604 each coordinate a divalent metal cation.

In terms of assembly, homotetramer. Forms the core of the anti-phage defense complex. Interacts with GajB; 2 GajB dimers dock at opposite sides of the GajA complex to form a 4:4 GajA-GajB assembly (GajAB). GajAB interacts with Bacillus phage Phi3T Gad1 protein; this interaction forms a 4:4:8 GajAB-Gad1 complex and leads to GajAB inhibition. The cofactor is Mg(2+).

Component of antiviral defense system Gabija type II, composed of GajA and GajB. Probably a nicking endonuclease that is strongly inhibited by physiological levels of nucleotides (NTP and dNTP). Expression of Gabija type II in B.subtilis (strain BEST7003) confers resistance to phages phi105, and SpBeta. During viral replication, when nucleotides are rapidly consumed, it is de-suppressed and degrades target DNA. In Bacillus cereus (strain HuB5-5), this protein is Endonuclease GajA.